Here is a 231-residue protein sequence, read N- to C-terminus: 7-cyano-7-deazaguanine synthase (231 aa).

8–18 (FSGGQDSTTCL) contacts ATP. Residues C188, C197, C200, and C203 each contribute to the Zn(2+) site.

The protein belongs to the QueC family. It depends on Zn(2+) as a cofactor.

It catalyses the reaction 7-carboxy-7-deazaguanine + NH4(+) + ATP = 7-cyano-7-deazaguanine + ADP + phosphate + H2O + H(+). It functions in the pathway purine metabolism; 7-cyano-7-deazaguanine biosynthesis. Functionally, catalyzes the ATP-dependent conversion of 7-carboxy-7-deazaguanine (CDG) to 7-cyano-7-deazaguanine (preQ(0)). This Salmonella paratyphi A (strain ATCC 9150 / SARB42) protein is 7-cyano-7-deazaguanine synthase.